The chain runs to 933 residues: uncharacterized protein (933 aa).

Positions 1-28 (MNGNLPHIQIQSPKNSLDHLNNGRQATH) are enriched in polar residues. Disordered stretches follow at residues 1 to 135 (MNGN…GESD), 173 to 194 (MDNESSEEERDGIPRVEGNAAD), and 252 to 275 (ATDFPNLAHESSEPSSSRHTADAQ). Residues 29–47 (NFEHGKPGDREEANGHADA) show a composition bias toward basic and acidic residues. The span at 49–59 (SSSGRSRYLSS) shows a compositional bias: low complexity. Polar residues-rich tracts occupy residues 87–101 (TLSFLNPSRASSNTH) and 108–135 (NRSSNVTRTVSGRKSNHGSSLTDTGESD). Over residues 173–182 (MDNESSEEER) the composition is skewed to acidic residues. The span at 264 to 275 (EPSSSRHTADAQ) shows a compositional bias: polar residues. 8 WD repeats span residues 314–353 (SSNNAIWAMKFSRDGRYLAVGGQDRILRIWAVLDSEHARS), 385–423 (GHTADILDLSWSRNNFLLSSSMDKTARLWHPVRKDCLCC), 425–465 (EHSD…VSFW), 467–506 (ELPELITAVAFSPDGGLAIAGTFVGLCLFYDTRGLRFRTQ), 517–563 (AKGS…LELK), 568–607 (ANAQSQNRAYFDDDGNYVICGSEDHQVFIWDLPPQHMHKT), 617–657 (ASVR…SVIS), and 665–710 (PSLR…AARK). Phosphoserine is present on Ser722. Residues 756–796 (NASQITNNENNGNDDIKKGDEPEEEHVGLRKNSTQEKNANL) form a disordered region. Over residues 757–768 (ASQITNNENNGN) the composition is skewed to polar residues. Residues 769–783 (DDIKKGDEPEEEHVG) show a composition bias toward basic and acidic residues.

The protein localises to the endoplasmic reticulum. Its subcellular location is the nucleus. This is an uncharacterized protein from Schizosaccharomyces pombe (strain 972 / ATCC 24843) (Fission yeast).